Reading from the N-terminus, the 90-residue chain is Small ribosomal subunit protein bS16 (90 aa).

It belongs to the bacterial ribosomal protein bS16 family.

The polypeptide is Small ribosomal subunit protein bS16 (Listeria innocua serovar 6a (strain ATCC BAA-680 / CLIP 11262)).